We begin with the raw amino-acid sequence, 174 residues long: Peptidyl-prolyl cis-trans isomerase D, mitochondrial (174 aa).

Residues 10 to 173 (FFQIKQGNTP…AACVIEDCGQ (164 aa)) form the PPIase cyclophilin-type domain.

The protein belongs to the cyclophilin-type PPIase family. PPIase D subfamily.

Its subcellular location is the mitochondrion. It catalyses the reaction [protein]-peptidylproline (omega=180) = [protein]-peptidylproline (omega=0). Binds cyclosporin A (CsA). CsA mediates some of its effects via an inhibitory action on PPIase. Functionally, PPIases accelerate the folding of proteins. It catalyzes the cis-trans isomerization of proline imidic peptide bonds in oligopeptides. The protein is Peptidyl-prolyl cis-trans isomerase D, mitochondrial (cypD) of Dictyostelium discoideum (Social amoeba).